A 116-amino-acid polypeptide reads, in one-letter code: Large ribosomal subunit protein bL17 (116 aa).

It belongs to the bacterial ribosomal protein bL17 family. As to quaternary structure, part of the 50S ribosomal subunit. Contacts protein L32.

The sequence is that of Large ribosomal subunit protein bL17 from Dictyoglomus thermophilum (strain ATCC 35947 / DSM 3960 / H-6-12).